We begin with the raw amino-acid sequence, 530 residues long: Bifunctional purine biosynthesis protein PurH (530 aa).

Residues 1-148 (MENSRPIKRA…KNHKDVGIVV (148 aa)) enclose the MGS-like domain.

It belongs to the PurH family.

The enzyme catalyses (6R)-10-formyltetrahydrofolate + 5-amino-1-(5-phospho-beta-D-ribosyl)imidazole-4-carboxamide = 5-formamido-1-(5-phospho-D-ribosyl)imidazole-4-carboxamide + (6S)-5,6,7,8-tetrahydrofolate. It catalyses the reaction IMP + H2O = 5-formamido-1-(5-phospho-D-ribosyl)imidazole-4-carboxamide. Its pathway is purine metabolism; IMP biosynthesis via de novo pathway; 5-formamido-1-(5-phospho-D-ribosyl)imidazole-4-carboxamide from 5-amino-1-(5-phospho-D-ribosyl)imidazole-4-carboxamide (10-formyl THF route): step 1/1. It participates in purine metabolism; IMP biosynthesis via de novo pathway; IMP from 5-formamido-1-(5-phospho-D-ribosyl)imidazole-4-carboxamide: step 1/1. The chain is Bifunctional purine biosynthesis protein PurH from Psychromonas ingrahamii (strain DSM 17664 / CCUG 51855 / 37).